The sequence spans 57 residues: UPF0337 protein SAV_1088 (57 aa).

Basic and acidic residues-rich tracts occupy residues Met-1 to Lys-15 and Gln-36 to His-57. A disordered region spans residues Met-1–His-57.

Belongs to the UPF0337 (CsbD) family.

The protein is UPF0337 protein SAV_1088 of Streptomyces avermitilis (strain ATCC 31267 / DSM 46492 / JCM 5070 / NBRC 14893 / NCIMB 12804 / NRRL 8165 / MA-4680).